We begin with the raw amino-acid sequence, 373 residues long: Transcription factor NF-E2 45 kDa subunit (373 aa).

Disordered stretches follow at residues 1–22 (MPPC…GELG) and 40–60 (LNVP…PGPL). The segment at 1-83 (MPPCPPQPNR…AGFTLPPPPY (83 aa)) is required for interaction with MAPK8. Positions 1-206 (MPPCPPQPNR…PPTETPLVLE (206 aa)) are transactivation domain. Short sequence motifs (PXY motif) lie at residues 61-65 (PPPTY) and 79-83 (PPPPY). The segment at 131–163 (LPVGQPKPQEDPESDSGLSLNYSDAESLELEGT) is disordered. Ser-157 carries the phosphoserine; by MAPK8 modification. The residue at position 170 (Ser-170) is a Phosphoserine; by PKA. The disordered stretch occupies residues 206–225 (ESSSGPVRAKPAVRGEAGSR). The bZIP domain occupies 266 to 329 (LVRDIRRRGK…EVMRQQLTEL (64 aa)). A basic motif region spans residues 268 to 287 (RDIRRRGKNKVAAQNCRKRK). A leucine-zipper region spans residues 291-298 (IVQLEREL). Lys-368 is covalently cross-linked (Glycyl lysine isopeptide (Lys-Gly) (interchain with G-Cter in SUMO); alternate). A Glycyl lysine isopeptide (Lys-Gly) (interchain with G-Cter in SUMO1); alternate cross-link involves residue Lys-368.

It belongs to the bZIP family. CNC subfamily. As to quaternary structure, homodimer; can bind DNA as a homodimer. Erythroid transcription activator nuclear factor erythroid-derived 2 (NF-E2), composed of a heterodimer of NFE2 and MAFK, possesses transactivation activity on beta-globin. Also forms high affinity heterodimer with MAFG; the interaction promotes erythropoiesis. Interacts (via the PXY motif 1) with ITCH (via the WW 1 domain); the interaction promotes 'Lys63'-linked ubiquitination of NFE2, translocates it to the cytoplasm and inhibits its transactivation activity. Interacts with KMT2D/MLL2; the interaction promotes transactivation of the beta-globin locus. Interacts with MAPK8 (phosphorylated form); the interaction leads to phosphorylation of NFE2 in undifferentiated cells. In terms of processing, phosphorylated on serine residues. In undifferentiated erythrocytes, phosphorylated by MAPK8 which then leads to ubiquitination and protein degradation. Sumoylated. Sumoylation is required for translocation to nuclear bodies PODs, anchoring to the gene loci, and transactivation of the beta-globin gene. Post-translationally, ubiquitinated mainly by 'Lys63'-linked ubiquitin. Polyubiquitination with 'Lys63'-linked ubiquitin by ITCH retains NFE2 in the cytoplasm preventing its transactivation activity. In undifferentiated erythrocyte, ubiquitinated after MAPK8-mediatd phosphorylation leading to protein degradation.

It localises to the nucleus. Its subcellular location is the PML body. It is found in the cytoplasm. Component of the NF-E2 complex essential for regulating erythroid and megakaryocytic maturation and differentiation. Binds to the hypersensitive site 2 (HS2) of the beta-globin control region (LCR). This subunit (NFE2) recognizes the TCAT/C sequence of the AP-1-like core palindrome present in a number of erythroid and megakaryocytic gene promoters. Requires MAFK or other small MAF proteins for binding to the NF-E2 motif. May play a role in all aspects of hemoglobin production from globin and heme synthesis to procurement of iron. This chain is Transcription factor NF-E2 45 kDa subunit (Nfe2), found in Rattus norvegicus (Rat).